The primary structure comprises 329 residues: Porphobilinogen deaminase (329 aa).

At C253 the chain carries S-(dipyrrolylmethanemethyl)cysteine.

The protein belongs to the HMBS family. In terms of assembly, monomer. Requires dipyrromethane as cofactor.

The enzyme catalyses 4 porphobilinogen + H2O = hydroxymethylbilane + 4 NH4(+). Its function is as follows. Tetrapolymerization of the monopyrrole PBG into the hydroxymethylbilane pre-uroporphyrinogen in several discrete steps. This chain is Porphobilinogen deaminase, found in Leifsonia xyli subsp. xyli (strain CTCB07).